Reading from the N-terminus, the 467-residue chain is Serine/threonine-protein kinase SSN3 (467 aa).

Composition is skewed to polar residues over residues 1–12 (MSFSNLPPSSGR) and 29–39 (GSSSFTANNPS). A disordered region spans residues 1–45 (MSFSNLPPSSGRGSHADGASGRSMPPFPGSSSFTANNPSKGIHPN). The 330-residue stretch at 79-408 (YLIVGFISSG…AKEALNHPYF (330 aa)) folds into the Protein kinase domain. ATP is bound by residues 85-93 (ISSGTYGRV) and Lys-109. The Proton acceptor role is filled by Asp-211. Residues 426–467 (YPNRRVSQDDNDIRSGSLPGTKRSGLPDDTLTSRAAKRAREM) are disordered.

Belongs to the protein kinase superfamily. CMGC Ser/Thr protein kinase family. CDC2/CDKX subfamily. In terms of assembly, component of the SRB8-11 complex, a regulatory module of the Mediator complex. Requires Mg(2+) as cofactor.

It is found in the nucleus. The catalysed reaction is L-seryl-[protein] + ATP = O-phospho-L-seryl-[protein] + ADP + H(+). It carries out the reaction L-threonyl-[protein] + ATP = O-phospho-L-threonyl-[protein] + ADP + H(+). It catalyses the reaction [DNA-directed RNA polymerase] + ATP = phospho-[DNA-directed RNA polymerase] + ADP + H(+). Functionally, component of the SRB8-11 complex. The SRB8-11 complex is a regulatory module of the Mediator complex which is itself involved in regulation of basal and activated RNA polymerase II-dependent transcription. The SRB8-11 complex may be involved in the transcriptional repression of a subset of genes regulated by Mediator. It may inhibit the association of the Mediator complex with RNA polymerase II to form the holoenzyme complex. The SRB8-11 complex phosphorylates the C-terminal domain (CTD) of the largest subunit of RNA polymerase II. The polypeptide is Serine/threonine-protein kinase SSN3 (SSN3) (Coccidioides immitis (strain RS) (Valley fever fungus)).